Reading from the N-terminus, the 883-residue chain is Puromycin-sensitive aminopeptidase (883 aa).

Substrate is bound by residues Glu125 and 265–269 (GAMEN). Residue His301 participates in Zn(2+) binding. Glu302 (proton acceptor) is an active-site residue. His305 and Glu324 together coordinate Zn(2+).

The protein belongs to the peptidase M1 family. Zn(2+) is required as a cofactor.

It carries out the reaction Release of an N-terminal amino acid, preferentially alanine, from a wide range of peptides, amides and arylamides.. Strongly inhibited by puromycin and DAMPAQ-22. Functionally, aminopeptidase with broad substrate specificity for several peptides. Involved in proteolytic events essential for cell growth and viability. Plays an essential role during prophase I of meiosis. Required for correct meiotic reconbination in both male and female gametophytes. This chain is Puromycin-sensitive aminopeptidase (MPA1), found in Arabidopsis thaliana (Mouse-ear cress).